A 534-amino-acid chain; its full sequence is CTP synthase (534 aa).

The amidoligase domain stretch occupies residues 1-266 (MKTKFIFVTG…DEQVVEKLNI (266 aa)). S14 provides a ligand contact to CTP. Position 14 (S14) interacts with UTP. ATP contacts are provided by residues 15 to 20 (SIGKGL) and D72. Mg(2+) is bound by residues D72 and E140. CTP is bound by residues 147-149 (DIE), 187-192 (KTKPTQ), and K223. Residues 187-192 (KTKPTQ) and K223 contribute to the UTP site. One can recognise a Glutamine amidotransferase type-1 domain in the interval 292-534 (RIAIVGKYVN…IAAALHNIKA (243 aa)). G354 contributes to the L-glutamine binding site. The active-site Nucleophile; for glutamine hydrolysis is the C381. L-glutamine is bound by residues 382 to 385 (LGMQ), E405, and R462. Residues H507 and E509 contribute to the active site.

The protein belongs to the CTP synthase family. Homotetramer.

It catalyses the reaction UTP + L-glutamine + ATP + H2O = CTP + L-glutamate + ADP + phosphate + 2 H(+). It carries out the reaction L-glutamine + H2O = L-glutamate + NH4(+). The catalysed reaction is UTP + NH4(+) + ATP = CTP + ADP + phosphate + 2 H(+). It participates in pyrimidine metabolism; CTP biosynthesis via de novo pathway; CTP from UDP: step 2/2. Its activity is regulated as follows. Allosterically activated by GTP, when glutamine is the substrate; GTP has no effect on the reaction when ammonia is the substrate. The allosteric effector GTP functions by stabilizing the protein conformation that binds the tetrahedral intermediate(s) formed during glutamine hydrolysis. Inhibited by the product CTP, via allosteric rather than competitive inhibition. In terms of biological role, catalyzes the ATP-dependent amination of UTP to CTP with either L-glutamine or ammonia as the source of nitrogen. Regulates intracellular CTP levels through interactions with the four ribonucleotide triphosphates. This Geotalea uraniireducens (strain Rf4) (Geobacter uraniireducens) protein is CTP synthase.